Consider the following 219-residue polypeptide: Large ribosomal subunit protein bL25 (219 aa).

A disordered region spans residues Glu-195–Lys-219. Residues Thr-197 to Pro-206 show a composition bias toward low complexity. A compositionally biased stretch (basic and acidic residues) spans Glu-207–Lys-219.

This sequence belongs to the bacterial ribosomal protein bL25 family. CTC subfamily. Part of the 50S ribosomal subunit; part of the 5S rRNA/L5/L18/L25 subcomplex. Contacts the 5S rRNA. Binds to the 5S rRNA independently of L5 and L18.

Functionally, this is one of the proteins that binds to the 5S RNA in the ribosome where it forms part of the central protuberance. The protein is Large ribosomal subunit protein bL25 of Fervidobacterium nodosum (strain ATCC 35602 / DSM 5306 / Rt17-B1).